The sequence spans 326 residues: tRNA N6-adenosine threonylcarbamoyltransferase (326 aa).

Fe cation contacts are provided by His-113 and His-117. Residues 134–138, Asp-167, Gly-180, and Asn-267 each bind substrate; that span reads VASGG. Asp-291 is a Fe cation binding site.

It belongs to the KAE1 / TsaD family. Requires Fe(2+) as cofactor.

The protein localises to the cytoplasm. It carries out the reaction L-threonylcarbamoyladenylate + adenosine(37) in tRNA = N(6)-L-threonylcarbamoyladenosine(37) in tRNA + AMP + H(+). Its function is as follows. Required for the formation of a threonylcarbamoyl group on adenosine at position 37 (t(6)A37) in tRNAs that read codons beginning with adenine. Is involved in the transfer of the threonylcarbamoyl moiety of threonylcarbamoyl-AMP (TC-AMP) to the N6 group of A37, together with TsaE and TsaB. TsaD likely plays a direct catalytic role in this reaction. In Thermus thermophilus (strain ATCC 27634 / DSM 579 / HB8), this protein is tRNA N6-adenosine threonylcarbamoyltransferase.